A 64-amino-acid chain; its full sequence is Large ribosomal subunit protein bL35 (64 aa).

It belongs to the bacterial ribosomal protein bL35 family.

The chain is Large ribosomal subunit protein bL35 from Micrococcus luteus (strain ATCC 4698 / DSM 20030 / JCM 1464 / CCM 169 / CCUG 5858 / IAM 1056 / NBRC 3333 / NCIMB 9278 / NCTC 2665 / VKM Ac-2230) (Micrococcus lysodeikticus).